Consider the following 28-residue polypeptide: 14-3-3-like protein 4 (28 aa).

This sequence belongs to the 14-3-3 family.

In Pseudotsuga menziesii (Douglas-fir), this protein is 14-3-3-like protein 4.